Reading from the N-terminus, the 154-residue chain is Protein-export protein SecB (154 aa).

Belongs to the SecB family. In terms of assembly, homotetramer, a dimer of dimers. One homotetramer interacts with 1 SecA dimer.

The protein resides in the cytoplasm. Functionally, one of the proteins required for the normal export of preproteins out of the cell cytoplasm. It is a molecular chaperone that binds to a subset of precursor proteins, maintaining them in a translocation-competent state. It also specifically binds to its receptor SecA. In Buchnera aphidicola subsp. Schizaphis graminum (strain Sg), this protein is Protein-export protein SecB.